The following is an 87-amino-acid chain: Pyocin-S1 immunity protein (87 aa).

Belongs to the colicins ColE2/ColE8/ColE9 and pyocins S1/S2 family.

This chain is Pyocin-S1 immunity protein (imm1), found in Pseudomonas aeruginosa.